Here is a 160-residue protein sequence, read N- to C-terminus: SsrA-binding protein (160 aa).

Residues 131 to 160 are disordered; sequence KKEYDKRHTERERDSDRELQRAVRSKGKDD.

Belongs to the SmpB family.

It localises to the cytoplasm. Required for rescue of stalled ribosomes mediated by trans-translation. Binds to transfer-messenger RNA (tmRNA), required for stable association of tmRNA with ribosomes. tmRNA and SmpB together mimic tRNA shape, replacing the anticodon stem-loop with SmpB. tmRNA is encoded by the ssrA gene; the 2 termini fold to resemble tRNA(Ala) and it encodes a 'tag peptide', a short internal open reading frame. During trans-translation Ala-aminoacylated tmRNA acts like a tRNA, entering the A-site of stalled ribosomes, displacing the stalled mRNA. The ribosome then switches to translate the ORF on the tmRNA; the nascent peptide is terminated with the 'tag peptide' encoded by the tmRNA and targeted for degradation. The ribosome is freed to recommence translation, which seems to be the essential function of trans-translation. The sequence is that of SsrA-binding protein from Pseudomonas syringae pv. syringae (strain B728a).